A 442-amino-acid polypeptide reads, in one-letter code: tRNA(Ile)-lysidine synthase (442 aa).

30 to 35 (SGGLDS) contributes to the ATP binding site.

The protein belongs to the tRNA(Ile)-lysidine synthase family.

Its subcellular location is the cytoplasm. The catalysed reaction is cytidine(34) in tRNA(Ile2) + L-lysine + ATP = lysidine(34) in tRNA(Ile2) + AMP + diphosphate + H(+). In terms of biological role, ligates lysine onto the cytidine present at position 34 of the AUA codon-specific tRNA(Ile) that contains the anticodon CAU, in an ATP-dependent manner. Cytidine is converted to lysidine, thus changing the amino acid specificity of the tRNA from methionine to isoleucine. The sequence is that of tRNA(Ile)-lysidine synthase from Pseudomonas fluorescens (strain Pf0-1).